We begin with the raw amino-acid sequence, 429 residues long: Aspartate--tRNA(Asp/Asn) ligase (429 aa).

L-aspartate is bound at residue glutamate 166. An aspartate region spans residues 188–191 (QLYK). Arginine 210 provides a ligand contact to L-aspartate. Residues 210–212 (RAE), 218–220 (RHL), and glutamate 352 each bind ATP. 2 residues coordinate Mg(2+): glutamate 352 and serine 355. The L-aspartate site is built by serine 355 and arginine 359. 400–403 (GAER) serves as a coordination point for ATP.

The protein belongs to the class-II aminoacyl-tRNA synthetase family. Type 2 subfamily. Homodimer. Mg(2+) serves as cofactor.

It localises to the cytoplasm. The enzyme catalyses tRNA(Asx) + L-aspartate + ATP = L-aspartyl-tRNA(Asx) + AMP + diphosphate. Aspartyl-tRNA synthetase with relaxed tRNA specificity since it is able to aspartylate not only its cognate tRNA(Asp) but also tRNA(Asn). Reaction proceeds in two steps: L-aspartate is first activated by ATP to form Asp-AMP and then transferred to the acceptor end of tRNA(Asp/Asn). The sequence is that of Aspartate--tRNA(Asp/Asn) ligase from Methanocorpusculum labreanum (strain ATCC 43576 / DSM 4855 / Z).